The primary structure comprises 272 residues: 3-methyl-2-oxobutanoate hydroxymethyltransferase (272 aa).

Positions 50 and 89 each coordinate Mg(2+). 3-methyl-2-oxobutanoate-binding positions include D50–S51, D89, and K119. E121 serves as a coordination point for Mg(2+). Catalysis depends on E188, which acts as the Proton acceptor.

It belongs to the PanB family. Homodecamer; pentamer of dimers. The cofactor is Mg(2+).

Its subcellular location is the cytoplasm. It catalyses the reaction 3-methyl-2-oxobutanoate + (6R)-5,10-methylene-5,6,7,8-tetrahydrofolate + H2O = 2-dehydropantoate + (6S)-5,6,7,8-tetrahydrofolate. The protein operates within cofactor biosynthesis; (R)-pantothenate biosynthesis; (R)-pantoate from 3-methyl-2-oxobutanoate: step 1/2. Its function is as follows. Catalyzes the reversible reaction in which hydroxymethyl group from 5,10-methylenetetrahydrofolate is transferred onto alpha-ketoisovalerate to form ketopantoate. This Methylobacterium radiotolerans (strain ATCC 27329 / DSM 1819 / JCM 2831 / NBRC 15690 / NCIMB 10815 / 0-1) protein is 3-methyl-2-oxobutanoate hydroxymethyltransferase.